The chain runs to 199 residues: Dephospho-CoA kinase (199 aa).

Residues 3-199 form the DPCK domain; it reads VIGLTGSIGM…AAAKMPRRRS (197 aa). 11–16 contributes to the ATP binding site; sequence GMGKST.

Belongs to the CoaE family.

The protein resides in the cytoplasm. It catalyses the reaction 3'-dephospho-CoA + ATP = ADP + CoA + H(+). It participates in cofactor biosynthesis; coenzyme A biosynthesis; CoA from (R)-pantothenate: step 5/5. In terms of biological role, catalyzes the phosphorylation of the 3'-hydroxyl group of dephosphocoenzyme A to form coenzyme A. The chain is Dephospho-CoA kinase from Nitrobacter winogradskyi (strain ATCC 25391 / DSM 10237 / CIP 104748 / NCIMB 11846 / Nb-255).